We begin with the raw amino-acid sequence, 716 residues long: DEAD-box ATP-dependent RNA helicase 31 (716 aa).

The tract at residues 99 to 188 is disordered; it reads GILKSDDEDE…LRLEDESSDE (90 aa). The span at 110–121 shows a compositional bias: basic and acidic residues; sequence DRSRGRNQEKRG. The segment covering 144–153 has biased composition (polar residues); the sequence is SRIQGKSSEA. Basic and acidic residues predominate over residues 155 to 188; the sequence is FRGRKETSFSRDREDEKGLRKREDLRLEDESSDE. A Q motif motif is present at residues 248–276; it reads TRFDHYPLSPLSLKAIKDAGYETMTVVQE. Residues 279–462 form the Helicase ATP-binding domain; it reads LPIILKGKDV…LVALRRDHEF (184 aa). 292 to 299 is an ATP binding site; sequence AKTGTGKT. The DEAD box motif lies at 410–413; sequence DEAD. Residues 497 to 643 enclose the Helicase C-terminal domain; sequence LREHIMGNVD…IDPETVKKVQ (147 aa).

Belongs to the DEAD box helicase family.

It carries out the reaction ATP + H2O = ADP + phosphate + H(+). The protein is DEAD-box ATP-dependent RNA helicase 31 (RH31) of Arabidopsis thaliana (Mouse-ear cress).